The primary structure comprises 198 residues: Proteasome subunit beta 1 (198 aa).

Residues 1 to 6 (MSGPGA) constitute a propeptide, removed in mature form; by autocatalysis. The active-site Nucleophile is the Thr-7.

This sequence belongs to the peptidase T1B family. In terms of assembly, the 20S proteasome core is composed of 14 alpha and 14 beta subunits that assemble into four stacked heptameric rings, resulting in a barrel-shaped structure. The two inner rings, each composed of seven catalytic beta subunits, are sandwiched by two outer rings, each composed of seven alpha subunits. The catalytic chamber with the active sites is on the inside of the barrel. Has a gated structure, the ends of the cylinder being occluded by the N-termini of the alpha-subunits. Is capped at one or both ends by the proteasome regulatory ATPase, PAN.

It localises to the cytoplasm. The catalysed reaction is Cleavage of peptide bonds with very broad specificity.. Its activity is regulated as follows. The formation of the proteasomal ATPase PAN-20S proteasome complex, via the docking of the C-termini of PAN into the intersubunit pockets in the alpha-rings, triggers opening of the gate for substrate entry. Interconversion between the open-gate and close-gate conformations leads to a dynamic regulation of the 20S proteasome proteolysis activity. Its function is as follows. Component of the proteasome core, a large protease complex with broad specificity involved in protein degradation. The polypeptide is Proteasome subunit beta 1 (Ignicoccus hospitalis (strain KIN4/I / DSM 18386 / JCM 14125)).